The primary structure comprises 2156 residues: MAM and LDL-receptor class A domain-containing protein 1 (2156 aa).

The N-terminal stretch at 1–31 (MLFFLDRMLAFPMNETFCCLWIACVFNSTLA) is a signal peptide. The Vesicular portion of the chain corresponds to 32-2076 (QQGTESFQCD…FTYAQNNTWT (2045 aa)). The LDL-receptor class A 1 domain maps to 33–68 (QGTESFQCDNGVSLPPDSICDFTDQCGDSSDERHCL). Cystine bridges form between cysteine 40–cysteine 58 and cysteine 52–cysteine 67. MAM domains lie at 71 to 229 (ERCD…GCLP) and 268 to 427 (QACG…ACGQ). The LDL-receptor class A 2 domain maps to 433–471 (LCSADEFPCTSGQCIAKESVCDSRQDCSDESDEDPATCS). Intrachain disulfides connect cysteine 434–cysteine 446, cysteine 441–cysteine 459, and cysteine 453–cysteine 470. 2 consecutive MAM domains span residues 474 to 637 (LTCD…ECEI) and 652 to 816 (SKCD…NCTL). Asparagine 813 is a glycosylation site (N-linked (GlcNAc...) asparagine). An LDL-receptor class A 3 domain is found at 822–860 (SCEGLDHFWCRHTRACIEKLRLCDLVDDCGDRTDEVNCA). 3 disulfide bridges follow: cysteine 823-cysteine 837, cysteine 831-cysteine 850, and cysteine 844-cysteine 859. An MAM 5 domain is found at 863–1024 (LQCNFETGIC…DDLSFMDCTL (162 aa)). An N-linked (GlcNAc...) asparagine glycan is attached at asparagine 1049. In terms of domain architecture, LDL-receptor class A 4 spans 1049–1086 (NCTDNEFICRSDGHCIEKMQKCDFKYDCPDKSDEASCV). 3 disulfides stabilise this stretch: cysteine 1050-cysteine 1063, cysteine 1057-cysteine 1076, and cysteine 1070-cysteine 1085. The 169-residue stretch at 1088–1256 (EVCSFEKRSL…DDISFQDCSP (169 aa)) folds into the MAM 6 domain. N-linked (GlcNAc...) asparagine glycosylation occurs at asparagine 1199. The region spanning 1263-1301 (KCTDHEFMCANKHCIAKDKLCDFVNDCADNSDETTFICR) is the LDL-receptor class A 5 domain. Disulfide bonds link cysteine 1264–cysteine 1276, cysteine 1271–cysteine 1289, and cysteine 1283–cysteine 1300. An MAM 7 domain is found at 1305–1465 (GRCDFEFDLC…DIVLTENCLS (161 aa)). A glycan (N-linked (GlcNAc...) asparagine) is linked at asparagine 1414. Residues 1482–1518 (FCPLGYRECHNGKCYRLEQSCNFVDNCGDNTDENECG) enclose the LDL-receptor class A 6 domain. Intrachain disulfides connect cysteine 1483/cysteine 1495, cysteine 1490/cysteine 1508, and cysteine 1502/cysteine 1517. Positions 1519–1676 (SSCTFEKGWC…DDIEFKNCTT (158 aa)) constitute an MAM 8 domain. The region spanning 1683-1720 (LCPEITDFLCRDKKCIASHLLCDYKPDCSDRSDEAHCA) is the LDL-receptor class A 7 domain. Cystine bridges form between cysteine 1684–cysteine 1697, cysteine 1692–cysteine 1710, and cysteine 1704–cysteine 1719. Residues 1727-1892 (GSCNFETSSG…DISFTPECVT (166 aa)) form the MAM 9 domain. 3 LDL-receptor class A domains span residues 1902–1939 (PCEA…MDCP), 1946–1982 (LCSN…LICS), and 1985–2023 (SCSN…SSCS). 12 disulfide bridges follow: cysteine 1903–cysteine 1916, cysteine 1910–cysteine 1929, cysteine 1923–cysteine 1938, cysteine 1947–cysteine 1959, cysteine 1954–cysteine 1972, cysteine 1966–cysteine 1981, cysteine 1986–cysteine 1999, cysteine 1993–cysteine 2012, cysteine 2006–cysteine 2022, cysteine 2025–cysteine 2036, cysteine 2030–cysteine 2045, and cysteine 2047–cysteine 2056. The EGF-like domain maps to 2024–2057 (ECPLNYCRNGGTCVVEKNGPMCRCRQGWKGNRCH). Residues 2077–2097 (LLGIGLAFLMTHITVAVLCFL) traverse the membrane as a helical segment. Over 2098-2156 (ANRKVPIRKTEGSGNCAFVNPVYGNWSNPEKTESSVYSFSNPLYGTTSGSLETLSHHLK) the chain is Cytoplasmic.

In terms of assembly, interacts with FGF19. As to expression, strongly expressed in the small intestine.

It localises to the cytoplasmic vesicle membrane. Functionally, enhances production and/or transport of FGF19 and thus has a role in regulation of bile acid synthesis. This is MAM and LDL-receptor class A domain-containing protein 1 from Homo sapiens (Human).